The primary structure comprises 552 residues: Urocanate hydratase (552 aa).

NAD(+) is bound by residues 49-50 (GG), Gln127, 173-175 (GMG), Asp193, 239-240 (NA), 260-264 (QTSAH), 270-271 (YI), and Tyr319. The active site involves Cys407. Gly489 contributes to the NAD(+) binding site.

The protein belongs to the urocanase family. Requires NAD(+) as cofactor.

The protein localises to the cytoplasm. The enzyme catalyses 4-imidazolone-5-propanoate = trans-urocanate + H2O. The protein operates within amino-acid degradation; L-histidine degradation into L-glutamate; N-formimidoyl-L-glutamate from L-histidine: step 2/3. Functionally, catalyzes the conversion of urocanate to 4-imidazolone-5-propionate. This Bacillus cereus (strain ATCC 14579 / DSM 31 / CCUG 7414 / JCM 2152 / NBRC 15305 / NCIMB 9373 / NCTC 2599 / NRRL B-3711) protein is Urocanate hydratase.